The sequence spans 1342 residues: DNA-directed RNA polymerase subunit beta (1342 aa).

This sequence belongs to the RNA polymerase beta chain family. The RNAP catalytic core consists of 2 alpha, 1 beta, 1 beta' and 1 omega subunit. When a sigma factor is associated with the core the holoenzyme is formed, which can initiate transcription.

It carries out the reaction RNA(n) + a ribonucleoside 5'-triphosphate = RNA(n+1) + diphosphate. Functionally, DNA-dependent RNA polymerase catalyzes the transcription of DNA into RNA using the four ribonucleoside triphosphates as substrates. This chain is DNA-directed RNA polymerase subunit beta, found in Salmonella choleraesuis (strain SC-B67).